Reading from the N-terminus, the 466-residue chain is Phytase A (466 aa).

Positions 1–19 are cleaved as a signal peptide; sequence MGVFVVLLSIATLFGSTSG. Asn27 is a glycosylation site (N-linked (GlcNAc...) asparagine). Cys31 and Cys40 form a disulfide bridge. 1D-myo-inositol hexakisphosphate is bound by residues Tyr51, Arg81, His82, Arg85, and Thr88. Intrachain disulfides connect Cys71-Cys414, Cys215-Cys465, Cys264-Cys282, and Cys436-Cys444. The Nucleophile role is filled by His82. 2 N-linked (GlcNAc...) asparagine glycosylation sites follow: Asn105 and Asn120. Position 165 (Arg165) interacts with 1D-myo-inositol hexakisphosphate. N-linked (GlcNAc...) asparagine glycans are attached at residues Asn207 and Asn230. Lys301 is a 1D-myo-inositol hexakisphosphate binding site. N-linked (GlcNAc...) asparagine glycosylation is found at Asn339 and Asn352. 1D-myo-inositol hexakisphosphate-binding residues include His361 and Asp362. Asn376 is a glycosylation site (N-linked (GlcNAc...) asparagine).

It belongs to the histidine acid phosphatase family. Monomer.

It is found in the secreted. The enzyme catalyses 1D-myo-inositol hexakisphosphate + H2O = 1D-myo-inositol 1,2,4,5,6-pentakisphosphate + phosphate. It carries out the reaction 1D-myo-inositol 1,2,4,5,6-pentakisphosphate + H2O = 1D-myo-inositol 1,2,5,6-tetrakisphosphate + phosphate. It catalyses the reaction 1D-myo-inositol 1,2,5,6-tetrakisphosphate + H2O = 1D-myo-inositol 1,2,6-trisphosphate + phosphate. The catalysed reaction is 1D-myo-inositol 1,2,6-trisphosphate + H2O = 1D-myo-inositol 1,2-bisphosphate + phosphate. The enzyme catalyses 1D-myo-inositol 1,2-bisphosphate + H2O = 1D-myo-inositol 2-phosphate + phosphate. Functionally, catalyzes the phosphate monoester hydrolysis of phytic acid (myo-inositol hexakisphosphate), which results in the stepwise formation of myo-inositol pentakis-, tetrakis-, tris-, bis-, and monophosphates, as well as the liberation of inorganic phosphate. Myo-inositol 2-monophosphate is the end product. Has a broad substrate specificity and is also able to dephosphorylate other classic acid phosphatase substrates such as p-nitrophenyl phosphate, phenyl phosphate, fructose 1,6-bisphosphate, glucose 6-phosphate, 3-phosphoglycerate, as well as ADP and ATP. In Aspergillus terreus, this protein is Phytase A.